Reading from the N-terminus, the 147-residue chain is Ribonuclease pancreatic gamma-type (147 aa).

Positions 1 to 25 (MGLEKSFLLFSLLVLVLGWVQPSLG) are cleaved as a signal peptide. The substrate site is built by Lys35 and Arg38. His40 functions as the Proton acceptor in the catalytic mechanism. 4 disulfide bridges follow: Cys54-Cys112, Cys68-Cys123, Cys86-Cys138, and Cys93-Cys100. Substrate is bound by residues 69 to 73 (KPMNT), Lys94, and Arg113. Catalysis depends on His142, which acts as the Proton donor.

The protein belongs to the pancreatic ribonuclease family. In terms of assembly, monomer.

Its subcellular location is the secreted. The enzyme catalyses an [RNA] containing cytidine + H2O = an [RNA]-3'-cytidine-3'-phosphate + a 5'-hydroxy-ribonucleotide-3'-[RNA].. It catalyses the reaction an [RNA] containing uridine + H2O = an [RNA]-3'-uridine-3'-phosphate + a 5'-hydroxy-ribonucleotide-3'-[RNA].. Functionally, endonuclease that catalyzes the cleavage of RNA on the 3' side of pyrimidine nucleotides. Acts on single-stranded and double-stranded RNA. The sequence is that of Ribonuclease pancreatic gamma-type from Rattus rattus (Black rat).